A 443-amino-acid chain; its full sequence is ATP-dependent protease ATPase subunit HslU (443 aa).

Residues Ile-18, 60 to 65 (GVGKTE), Asp-256, Glu-321, and Arg-393 contribute to the ATP site.

The protein belongs to the ClpX chaperone family. HslU subfamily. As to quaternary structure, a double ring-shaped homohexamer of HslV is capped on each side by a ring-shaped HslU homohexamer. The assembly of the HslU/HslV complex is dependent on binding of ATP.

The protein resides in the cytoplasm. Functionally, ATPase subunit of a proteasome-like degradation complex; this subunit has chaperone activity. The binding of ATP and its subsequent hydrolysis by HslU are essential for unfolding of protein substrates subsequently hydrolyzed by HslV. HslU recognizes the N-terminal part of its protein substrates and unfolds these before they are guided to HslV for hydrolysis. The sequence is that of ATP-dependent protease ATPase subunit HslU from Yersinia pestis bv. Antiqua (strain Antiqua).